We begin with the raw amino-acid sequence, 215 residues long: Pyrrolidone-carboxylate peptidase (215 aa).

Active-site residues include Glu-80, Cys-143, and His-167.

This sequence belongs to the peptidase C15 family. In terms of assembly, homotetramer.

It localises to the cytoplasm. It catalyses the reaction Release of an N-terminal pyroglutamyl group from a polypeptide, the second amino acid generally not being Pro.. In terms of biological role, removes 5-oxoproline from various penultimate amino acid residues except L-proline. The chain is Pyrrolidone-carboxylate peptidase from Yersinia pseudotuberculosis serotype O:3 (strain YPIII).